The chain runs to 494 residues: Probable malate:quinone oxidoreductase (494 aa).

The protein belongs to the MQO family. Requires FAD as cofactor.

It catalyses the reaction (S)-malate + a quinone = a quinol + oxaloacetate. The protein operates within carbohydrate metabolism; tricarboxylic acid cycle; oxaloacetate from (S)-malate (quinone route): step 1/1. The sequence is that of Probable malate:quinone oxidoreductase from Helicobacter hepaticus (strain ATCC 51449 / 3B1).